A 309-amino-acid chain; its full sequence is Cyclin-dependent kinase B1-1 (309 aa).

A Protein kinase domain is found at 4 to 301 (YEKLEKVGEG…AKTALDHPYF (298 aa)). Residues 10–18 (VGEGTYGKV) and K33 contribute to the ATP site. Y15 carries the phosphotyrosine modification. The Proton acceptor role is filled by D142. T176 is subject to Phosphothreonine; by CAK.

Belongs to the protein kinase superfamily. CMGC Ser/Thr protein kinase family. CDC2/CDKX subfamily. Interacts with CKS1. Interacts with CYCU3-1. Interacts with SIM, SMR1 and SMR2. In terms of tissue distribution, highly expressed in guard cells and stomatal precursor cells of cotyledons. Expressed in roots, stems, flowers and siliques.

Its subcellular location is the nucleus. It catalyses the reaction L-seryl-[protein] + ATP = O-phospho-L-seryl-[protein] + ADP + H(+). The enzyme catalyses L-threonyl-[protein] + ATP = O-phospho-L-threonyl-[protein] + ADP + H(+). The catalysed reaction is [DNA-directed RNA polymerase] + ATP = phospho-[DNA-directed RNA polymerase] + ADP + H(+). Its activity is regulated as follows. Phosphorylation at Thr-14 or Tyr-15 inactivates the enzyme, while phosphorylation at Thr-176 activates it. Functionally, may control G2/M (mitosis) phase progression. Plays a role in regulating seedling growth in darkness via regulation of hypocotyl cell elongation and cotyledon cell development. Plays a role in stomatal development. Required to suppress endoreduplication. Together with CDKB1-2, promotes both the last division in the stomatal cell lineage as well as the number of stomata. In collaboration with MYB124 and MYB88, restrict the G1/S transition and chloroplast and nuclear number during stomatal formation, and normally maintain fate and developmental progression throughout the stomatal cell lineage. This Arabidopsis thaliana (Mouse-ear cress) protein is Cyclin-dependent kinase B1-1 (CDKB1-1).